The chain runs to 295 residues: uncharacterized protein (295 aa).

The N-terminal stretch at 1-19 (MFKKYIFILILFIASIARA) is a signal peptide. The interval 275–295 (RNNPPLKNNNAKGKNPYDTNK) is disordered. The segment covering 276–295 (NNPPLKNNNAKGKNPYDTNK) has biased composition (low complexity).

This is an uncharacterized protein from Rickettsia conorii (strain ATCC VR-613 / Malish 7).